Reading from the N-terminus, the 214-residue chain is MIIVLLGAPGAGKGTQSVLVAEKYGLKHISTGDLLREEIANNTELGKQAKKLIDGGNLVPDEMILGLLKNAFLNRGKGVVLDGFPRTLSQAEMMHPIVKGLAEKLSAVINIKLSEDEITQRIVLRRQCKNCGNIFNLRFIKNFDGKCPKCGSTDIYQRADDNEESAKNRINVYHSQTEPVVGFYKNKTYYKEVDGSKNKEEVFEEISKFINRKK.

10–15 (GAGKGT) is an ATP binding site. The interval 30–59 (STGDLLREEIANNTELGKQAKKLIDGGNLV) is NMP. AMP-binding positions include Thr31, Arg36, 57–59 (NLV), 83–86 (GFPR), and Gln90. Residues 124–161 (LRRQCKNCGNIFNLRFIKNFDGKCPKCGSTDIYQRADD) form an LID region. An ATP-binding site is contributed by Arg125. Zn(2+)-binding residues include Cys128 and Cys131. 134–135 (IF) provides a ligand contact to ATP. Residues Cys147 and Cys150 each coordinate Zn(2+). Residues Arg158 and Arg169 each coordinate AMP. Residue Lys197 participates in ATP binding.

The protein belongs to the adenylate kinase family. In terms of assembly, monomer.

The protein resides in the cytoplasm. It carries out the reaction AMP + ATP = 2 ADP. It functions in the pathway purine metabolism; AMP biosynthesis via salvage pathway; AMP from ADP: step 1/1. Functionally, catalyzes the reversible transfer of the terminal phosphate group between ATP and AMP. Plays an important role in cellular energy homeostasis and in adenine nucleotide metabolism. The sequence is that of Adenylate kinase from Elusimicrobium minutum (strain Pei191).